A 295-amino-acid polypeptide reads, in one-letter code: Light-independent protochlorophyllide reductase iron-sulfur ATP-binding protein (295 aa).

Residues 39–44 and K68 each bind ATP; that span reads GIGKST. S43 contacts Mg(2+). 2 residues coordinate [4Fe-4S] cluster: C124 and C158. An ATP-binding site is contributed by 209–210; sequence NR.

The protein belongs to the NifH/BchL/ChlL family. As to quaternary structure, homodimer. Protochlorophyllide reductase is composed of three subunits; ChlL, ChlN and ChlB. Requires [4Fe-4S] cluster as cofactor.

The enzyme catalyses chlorophyllide a + oxidized 2[4Fe-4S]-[ferredoxin] + 2 ADP + 2 phosphate = protochlorophyllide a + reduced 2[4Fe-4S]-[ferredoxin] + 2 ATP + 2 H2O. The protein operates within porphyrin-containing compound metabolism; chlorophyll biosynthesis (light-independent). Its function is as follows. Component of the dark-operative protochlorophyllide reductase (DPOR) that uses Mg-ATP and reduced ferredoxin to reduce ring D of protochlorophyllide (Pchlide) to form chlorophyllide a (Chlide). This reaction is light-independent. The L component serves as a unique electron donor to the NB-component of the complex, and binds Mg-ATP. The sequence is that of Light-independent protochlorophyllide reductase iron-sulfur ATP-binding protein from Prochlorococcus marinus (strain MIT 9301).